Reading from the N-terminus, the 167-residue chain is Ribosome maturation factor RimM (167 aa).

The PRC barrel domain maps to 94–166 (DDRAWLHELE…YIHVPRFDEF (73 aa)).

This sequence belongs to the RimM family. As to quaternary structure, binds ribosomal protein uS19.

Its subcellular location is the cytoplasm. Its function is as follows. An accessory protein needed during the final step in the assembly of 30S ribosomal subunit, possibly for assembly of the head region. Essential for efficient processing of 16S rRNA. May be needed both before and after RbfA during the maturation of 16S rRNA. It has affinity for free ribosomal 30S subunits but not for 70S ribosomes. The chain is Ribosome maturation factor RimM from Chlorobium luteolum (strain DSM 273 / BCRC 81028 / 2530) (Pelodictyon luteolum).